Reading from the N-terminus, the 38-residue chain is Potassium channel toxin alpha-KTx 2.21 (38 aa).

3 disulfide bridges follow: Cys-7–Cys-29, Cys-13–Cys-34, and Cys-17–Cys-36.

Expressed by the venom gland.

Its subcellular location is the secreted. Functionally, inhibits human voltage-gated potassium (Kv) channels Kv1.2/KCNA2 and Kv1.3/KCNA3. Does not block human Kv1.1/KCNA1 at 100nM concentration. The chain is Potassium channel toxin alpha-KTx 2.21 from Centruroides bonito (Scorpion).